The following is a 338-amino-acid chain: Uroporphyrinogen decarboxylase (338 aa).

Substrate is bound by residues 23 to 27 (RQAGR), D72, Y146, T201, and H312.

This sequence belongs to the uroporphyrinogen decarboxylase family. Homodimer.

It is found in the cytoplasm. The enzyme catalyses uroporphyrinogen III + 4 H(+) = coproporphyrinogen III + 4 CO2. It participates in porphyrin-containing compound metabolism; protoporphyrin-IX biosynthesis; coproporphyrinogen-III from 5-aminolevulinate: step 4/4. Catalyzes the decarboxylation of four acetate groups of uroporphyrinogen-III to yield coproporphyrinogen-III. In Thermodesulfovibrio yellowstonii (strain ATCC 51303 / DSM 11347 / YP87), this protein is Uroporphyrinogen decarboxylase.